A 144-amino-acid polypeptide reads, in one-letter code: Large ribosomal subunit protein uL16 (144 aa).

Belongs to the universal ribosomal protein uL16 family. As to quaternary structure, part of the 50S ribosomal subunit.

Binds 23S rRNA and is also seen to make contacts with the A and possibly P site tRNAs. This is Large ribosomal subunit protein uL16 from Halothermothrix orenii (strain H 168 / OCM 544 / DSM 9562).